We begin with the raw amino-acid sequence, 512 residues long: Kynurenine 3-monooxygenase (512 aa).

The protein belongs to the aromatic-ring hydroxylase family. KMO subfamily. FAD serves as cofactor.

The protein localises to the mitochondrion outer membrane. It carries out the reaction L-kynurenine + NADPH + O2 + H(+) = 3-hydroxy-L-kynurenine + NADP(+) + H2O. The protein operates within cofactor biosynthesis; NAD(+) biosynthesis; quinolinate from L-kynurenine: step 1/3. Catalyzes the hydroxylation of L-kynurenine (L-Kyn) to form 3-hydroxy-L-kynurenine (L-3OHKyn). Required for synthesis of quinolinic acid. This chain is Kynurenine 3-monooxygenase (bna4), found in Aspergillus fumigatus (strain ATCC MYA-4609 / CBS 101355 / FGSC A1100 / Af293) (Neosartorya fumigata).